Reading from the N-terminus, the 291-residue chain is UDP-N-acetylenolpyruvoylglucosamine reductase (291 aa).

The FAD-binding PCMH-type domain maps to 19 to 186 (GIGGPAEWIA…VSARLKLASG (168 aa)). R165 is an active-site residue. S215 (proton donor) is an active-site residue. E285 is an active-site residue.

This sequence belongs to the MurB family. FAD serves as cofactor.

It is found in the cytoplasm. The enzyme catalyses UDP-N-acetyl-alpha-D-muramate + NADP(+) = UDP-N-acetyl-3-O-(1-carboxyvinyl)-alpha-D-glucosamine + NADPH + H(+). It functions in the pathway cell wall biogenesis; peptidoglycan biosynthesis. Functionally, cell wall formation. This Prochlorococcus marinus (strain NATL2A) protein is UDP-N-acetylenolpyruvoylglucosamine reductase.